The following is a 624-amino-acid chain: Histone-lysine N-methyltransferase, H3 lysine-9 specific SUVH4 (624 aa).

Disordered regions lie at residues 1–25 (MAGK…VQKV) and 54–86 (DDTE…KGKQ). In terms of domain architecture, YDG spans 149–302 (GDLPGIDVGH…FTVYKYRLKR (154 aa)). Positions 381-443 (TGCNCRGSCT…KCVNRTSQKR (63 aa)) constitute a Pre-SET domain. Zn(2+)-binding residues include Cys383, Cys385, Cys389, Cys395, Cys397, Cys425, Cys429, Cys431, and Cys435. The 149-residue stretch at 446–594 (FNLEVFRSAK…PMQELTYDYG (149 aa)) folds into the SET domain. S-adenosyl-L-methionine is bound by residues 456-458 (KGW), Tyr493, Arg548, and 551-552 (NH). Zn(2+)-binding residues include Cys554, Cys612, Cys614, and Cys619. The Post-SET domain occupies 608–624 (KQLACYCGALNCRKRLY).

Belongs to the class V-like SAM-binding methyltransferase superfamily. Histone-lysine methyltransferase family. Suvar3-9 subfamily. As to quaternary structure, interacts with H3 histone. In terms of tissue distribution, expressed in leaves stems and flowers.

The protein resides in the nucleus. The protein localises to the chromosome. It localises to the centromere. The catalysed reaction is N(6)-methyl-L-lysyl(9)-[histone H3] + S-adenosyl-L-methionine = N(6),N(6)-dimethyl-L-lysyl(9)-[histone H3] + S-adenosyl-L-homocysteine + H(+). It carries out the reaction L-lysyl(9)-[histone H3] + S-adenosyl-L-methionine = N(6)-methyl-L-lysyl(9)-[histone H3] + S-adenosyl-L-homocysteine + H(+). Its function is as follows. Histone methyltransferase. Methylates 'Lys-9' of histone H3. H3 'Lys-9' methylation represents a specific tag for epigenetic transcriptional repression. The silencing mechanism via DNA CpNpG methylation requires the targeting of chromomethylase CMT3 to methylated histones, probably through an interaction with an HP1-like adapter. By its function, KYP is directly required for the maintenance of the DNA CpNpG and asymmetric methylation. Involved in the silencing of transposable elements. The protein is Histone-lysine N-methyltransferase, H3 lysine-9 specific SUVH4 (SUVH4) of Arabidopsis thaliana (Mouse-ear cress).